The primary structure comprises 671 residues: Acetyl-coenzyme A synthetase (671 aa).

Positions 1–21 (MPTASASESSSNQPESSNASG) are disordered. Residues 221–224 (RRGK), Thr-339, and Asn-363 each bind CoA. ATP contacts are provided by residues 415 to 417 (GEG), 439 to 444 (DTWWQT), Asp-528, and Arg-543. Ser-551 contacts CoA. Arg-554 contacts ATP. Mg(2+)-binding residues include Val-565, His-567, and Val-570. Arg-611 lines the CoA pocket. Lys-636 carries the post-translational modification N6-acetyllysine.

The protein belongs to the ATP-dependent AMP-binding enzyme family. Mg(2+) serves as cofactor. In terms of processing, acetylated. Deacetylation by the SIR2-homolog deacetylase activates the enzyme.

The catalysed reaction is acetate + ATP + CoA = acetyl-CoA + AMP + diphosphate. In terms of biological role, catalyzes the conversion of acetate into acetyl-CoA (AcCoA), an essential intermediate at the junction of anabolic and catabolic pathways. AcsA undergoes a two-step reaction. In the first half reaction, AcsA combines acetate with ATP to form acetyl-adenylate (AcAMP) intermediate. In the second half reaction, it can then transfer the acetyl group from AcAMP to the sulfhydryl group of CoA, forming the product AcCoA. This is Acetyl-coenzyme A synthetase from Rhodopirellula baltica (strain DSM 10527 / NCIMB 13988 / SH1).